A 60-amino-acid polypeptide reads, in one-letter code: uncharacterized protein (60 aa).

Residues 27 to 49 (YYWLVSTARMVLGVTILILILIG) form a helical membrane-spanning segment.

It is found in the membrane. This is an uncharacterized protein from Archaeoglobus fulgidus (strain ATCC 49558 / DSM 4304 / JCM 9628 / NBRC 100126 / VC-16).